Consider the following 359-residue polypeptide: Probable C-C chemokine receptor type 3 (359 aa).

Residues 1–38 lie on the Extracellular side of the membrane; that stretch reads MAFNTDEIKTVVESFETTPYEYEWAPPCEKVRIKELGS. Residues 39 to 64 form a helical membrane-spanning segment; that stretch reads WLLPPLYSLVFIIGLLGNMMVVLILI. Over 65–68 the chain is Cytoplasmic; it reads KYRK. A helical transmembrane segment spans residues 69–95; the sequence is LQIMTNIYLFNLAISDLLFLFTVPFWI. Over 96–111 the chain is Extracellular; sequence HYVLWNEWGFGHYMCK. The cysteines at positions 110 and 187 are disulfide-linked. The chain crosses the membrane as a helical span at residues 112–133; that stretch reads MLSGFYYLALYSEIFFIILLTI. Residues 134–150 are Cytoplasmic-facing; it reads DRYLAIVHAVFALRART. A helical membrane pass occupies residues 151 to 175; the sequence is VTFATITSIITWGLAGLAALPEFIF. The Extracellular segment spans residues 176–201; that stretch reads HESQDSFGEFSCSPRYPEGEEDSWKR. Residues 202-227 traverse the membrane as a helical segment; sequence FHALRMNIFGLALPLLIMVICYSGII. At 228–243 the chain is on the cytoplasmic side; it reads KTLLRCPNKKKHKAIR. The helical transmembrane segment at 244–268 threads the bilayer; the sequence is LIFVVMIVFFIFWTPYNLVLLFSAF. The Extracellular segment spans residues 269-285; the sequence is HSTFLETSCQQSKHLDL. Residues 286–309 traverse the membrane as a helical segment; it reads AMQVTEVIAYTHCCINPVIYAFVG. The Cytoplasmic segment spans residues 310–359; the sequence is ERFRKHLRLFFHRNVAVYLGKYIPFLPGEKMERTSSVSPSTGEQEISVVF.

This sequence belongs to the G-protein coupled receptor 1 family. As to expression, detected in skeletal muscle and in trace amounts in leukocytes.

Its subcellular location is the cell membrane. Receptor for C-C type chemokine. Binds and responds to a variety of chemokines, including CCL11, CCL26, CCL7, CCL13, RANTES(CCL5) and CCL15. Subsequently transduces a signal by increasing the intracellular calcium ions level. In addition acts as a possible functional receptor for NARS1. The chain is Probable C-C chemokine receptor type 3 (Ccr3) from Mus musculus (Mouse).